The chain runs to 706 residues: Kinesin-like protein KIF2A (706 aa).

Residues 1–217 (MATANFGKIQ…LDYRPLTTAD (217 aa)) form a globular region. A disordered region spans residues 66–139 (LVPDEEIEPS…AQQNGSVSDI (74 aa)). Ser-75 carries the post-translational modification Phosphoserine. Thr-78 and Thr-97 each carry phosphothreonine. Ser-100 carries the phosphoserine modification. Residue Lys-102 is modified to N6-acetyllysine. A compositionally biased stretch (polar residues) spans 123-139 (FPEQSSSAQQNGSVSDI). Residues Ser-135 and Ser-140 each carry the phosphoserine modification. The segment at 165 to 186 (KLQEKREKRRLQQQELREKRAQ) is disordered. Residues 223–553 (RICVCVRKRP…LRYANRVKEL (331 aa)) form the Kinesin motor domain. 313-320 (GQTGSGKT) contributes to the ATP binding site. Asp-556 and Gln-573 each carry phosphoserine. Residues 660–699 (ATQLEAILEQKIDILTELRDKVKSFRAALQEEEQASKQIN) adopt a coiled-coil conformation.

The protein belongs to the TRAFAC class myosin-kinesin ATPase superfamily. Kinesin family. MCAK/KIF2 subfamily. In terms of assembly, interacts with AURKA and PLK1. Interacts with PSRC1. Interacts with MCRS1; the interaction enhances recruitment of KIF2A to the minus ends of spindle microtubules which promotes chromosome alignment.

It is found in the cytoplasm. The protein resides in the cytoskeleton. Its subcellular location is the microtubule organizing center. The protein localises to the centrosome. It localises to the spindle pole. It is found in the spindle. In terms of biological role, plus end-directed microtubule-dependent motor required for normal brain development. May regulate microtubule dynamics during axonal growth. Required for normal progression through mitosis. Required for normal congress of chromosomes at the metaphase plate. Required for normal spindle dynamics during mitosis. Promotes spindle turnover. Implicated in formation of bipolar mitotic spindles. Has microtubule depolymerization activity. This Homo sapiens (Human) protein is Kinesin-like protein KIF2A (KIF2A).